The chain runs to 119 residues: Protein Wnt-4 (119 aa).

Serine 1 is lipidated: O-palmitoleoyl serine; by PORCN. 2 cysteine pairs are disulfide-bonded: cysteine 69–cysteine 100 and cysteine 85–cysteine 95. An N-linked (GlcNAc...) asparagine glycan is attached at asparagine 86.

This sequence belongs to the Wnt family. In terms of processing, palmitoleoylation is required for efficient binding to frizzled receptors. Depalmitoleoylation leads to Wnt signaling pathway inhibition.

The protein localises to the secreted. It is found in the extracellular space. Its subcellular location is the extracellular matrix. In terms of biological role, ligand for members of the frizzled family of seven transmembrane receptors. Plays an important role in embryonic development. The protein is Protein Wnt-4 (WNT-4) of Plethodon jordani (Red-cheeked salamander).